We begin with the raw amino-acid sequence, 277 residues long: Adaptin ear-binding coat-associated protein 1 (277 aa).

The segment at 164–277 (GNITAKKGGT…APQPSNWVQF (114 aa)) is disordered. Pro residues predominate over residues 187–201 (LPPPPGGKVTIPPPS). Thr211 carries the post-translational modification Phosphothreonine. Residues 222–234 (SNDSDILLDLDSP) show a composition bias toward low complexity. The span at 235–245 (APVPTSAPAPA) shows a compositional bias: pro residues. Short sequence motifs (WXXF motif) lie at residues 254 to 257 (WGDF) and 274 to 277 (WVQF). Polar residues predominate over residues 258 to 277 (STASSSVPNQAPQPSNWVQF).

Belongs to the NECAP family. Interacts with AP1G1 and AP2A1 components of the adapter protein complexes AP-1 and AP-2. Interacts with the GAE domain proteins GGA1, GGA2 and GGA3. Interacts with AP2A2. As to expression, expressed predominantly in brain (at protein level).

Its subcellular location is the cytoplasmic vesicle. The protein localises to the clathrin-coated vesicle membrane. It is found in the cell membrane. Involved in endocytosis. This Rattus norvegicus (Rat) protein is Adaptin ear-binding coat-associated protein 1 (Necap1).